Consider the following 969-residue polypeptide: RNA polymerase-associated protein RapA (969 aa).

The region spanning 162-339 (EVGQRVAPRV…FARLALLDAD (178 aa)) is the Helicase ATP-binding domain. 175-182 (DEVGLGKT) is an ATP binding site. Residues 285 to 288 (DEAH) carry the DEAH box motif. A Helicase C-terminal domain is found at 492-663 (RIEWLITFLK…IFLKNPQAVG (172 aa)).

The protein belongs to the SNF2/RAD54 helicase family. RapA subfamily. In terms of assembly, interacts with the RNAP. Has a higher affinity for the core RNAP than for the holoenzyme. Its ATPase activity is stimulated by binding to RNAP.

Functionally, transcription regulator that activates transcription by stimulating RNA polymerase (RNAP) recycling in case of stress conditions such as supercoiled DNA or high salt concentrations. Probably acts by releasing the RNAP, when it is trapped or immobilized on tightly supercoiled DNA. Does not activate transcription on linear DNA. Probably not involved in DNA repair. The protein is RNA polymerase-associated protein RapA of Actinobacillus pleuropneumoniae serotype 3 (strain JL03).